The primary structure comprises 432 residues: Peptidase B (432 aa).

Residues Lys-196 and Asp-201 each contribute to the Mn(2+) site. Residue Lys-208 is part of the active site. Positions 219, 278, and 280 each coordinate Mn(2+). The active site involves Arg-282.

The protein belongs to the peptidase M17 family. As to quaternary structure, homohexamer. Requires Mn(2+) as cofactor.

It localises to the cytoplasm. The enzyme catalyses Release of an N-terminal amino acid, Xaa, from a peptide or arylamide. Xaa is preferably Glu or Asp but may be other amino acids, including Leu, Met, His, Cys and Gln.. Functionally, probably plays an important role in intracellular peptide degradation. In Yersinia pestis bv. Antiqua (strain Antiqua), this protein is Peptidase B.